The sequence spans 591 residues: Aspartate--tRNA ligase (591 aa).

E171 lines the L-aspartate pocket. Positions 195-198 (QLFK) are aspartate. R217 provides a ligand contact to L-aspartate. ATP contacts are provided by residues 217 to 219 (RDE) and Q226. H448 is an L-aspartate binding site. E482 lines the ATP pocket. R489 contacts L-aspartate. 534-537 (GLDR) contacts ATP.

The protein belongs to the class-II aminoacyl-tRNA synthetase family. Type 1 subfamily. As to quaternary structure, homodimer.

It is found in the cytoplasm. It carries out the reaction tRNA(Asp) + L-aspartate + ATP = L-aspartyl-tRNA(Asp) + AMP + diphosphate. In terms of biological role, catalyzes the attachment of L-aspartate to tRNA(Asp) in a two-step reaction: L-aspartate is first activated by ATP to form Asp-AMP and then transferred to the acceptor end of tRNA(Asp). The protein is Aspartate--tRNA ligase of Vibrio cholerae serotype O1 (strain ATCC 39541 / Classical Ogawa 395 / O395).